A 99-amino-acid chain; its full sequence is Putative RNA-binding protein RbpE (99 aa).

Residues 2–79 (SIYVGNLSYS…RVLKVNKARP (78 aa)) enclose the RRM domain. Positions 78-99 (RPREEKGARSGGGSWSRNNGGY) are disordered. A compositionally biased stretch (gly residues) spans 86-99 (RSGGGSWSRNNGGY).

In Nostoc sp. (strain PCC 7120 / SAG 25.82 / UTEX 2576), this protein is Putative RNA-binding protein RbpE (rbpE).